A 262-amino-acid chain; its full sequence is Leucine-rich repeat-containing protein 18 (262 aa).

LRR repeat units lie at residues 28–49 (GRKR…ILRL), 51–72 (DIDE…IAKF), 74–95 (NLRW…IGQM), 97–118 (SLLF…VELN), 122–144 (NIRT…GALK), 145–167 (ELHE…AKLP), and 168–189 (KLKK…EMFV).

Exclusively expressed in spermatocytes and roud spermatids within seminiferous tubules during spermatogenesis.

It localises to the cytoplasm. Functionally, may be involved in the regulation of spermatogenesis and sperm maturation. This chain is Leucine-rich repeat-containing protein 18 (Lrrc18), found in Mus musculus (Mouse).